Reading from the N-terminus, the 119-residue chain is Large ribosomal subunit protein bL20 (119 aa).

Belongs to the bacterial ribosomal protein bL20 family.

Its function is as follows. Binds directly to 23S ribosomal RNA and is necessary for the in vitro assembly process of the 50S ribosomal subunit. It is not involved in the protein synthesizing functions of that subunit. This chain is Large ribosomal subunit protein bL20, found in Xylella fastidiosa (strain M12).